Reading from the N-terminus, the 90-residue chain is Probable Fe(2+)-trafficking protein (90 aa).

The protein belongs to the Fe(2+)-trafficking protein family.

Its function is as follows. Could be a mediator in iron transactions between iron acquisition and iron-requiring processes, such as synthesis and/or repair of Fe-S clusters in biosynthetic enzymes. The polypeptide is Probable Fe(2+)-trafficking protein (Pseudoalteromonas atlantica (strain T6c / ATCC BAA-1087)).